The primary structure comprises 308 residues: Small ribosomal subunit protein uS2 (308 aa).

Position 2 is an N-acetylserine (S2). Laminin-binding stretches follow at residues 161–180 and 205–229; these read IPCN…MLAR and RDPE…EFQG. [DE]-W-[ST] repeat units lie at residues 230–232, 245–247, 279–281, 288–290, and 306–308; these read EWT and DWS. A laminin-binding region spans residues 242-308; the sequence is EVADWSEGVQ…DWGGATADWS (67 aa). The tract at residues 262–308 is disordered; it reads AGIEAPGKPAPAEVYAEDWSAQPATEDWSAAPTAQAGDWGGATADWS.

It belongs to the universal ribosomal protein uS2 family. As to quaternary structure, monomer (37LRP) and homodimer (67LR). Component of the small ribosomal subunit. Mature ribosomes consist of a small (40S) and a large (60S) subunit. The 40S subunit contains about 33 different proteins and 1 molecule of RNA (18S). The 60S subunit contains about 49 different proteins and 3 molecules of RNA (28S, 5.8S and 5S). Interacts with rps21. Interacts with several laminins including at least lamb1. Interacts with mdk. In terms of processing, acylated. Acylation may be a prerequisite for conversion of the monomeric 37 kDa laminin receptor precursor (37LRP) to the mature dimeric 67 kDa laminin receptor (67LR), and may provide a mechanism for membrane association. Cleaved by stromelysin-3 (ST3) at the cell surface. Cleavage by stromelysin-3 may be a mechanism to alter cell-extracellular matrix interactions.

It localises to the cell membrane. It is found in the cytoplasm. The protein resides in the nucleus. Functionally, required for the assembly and/or stability of the 40S ribosomal subunit. Required for the processing of the 20S rRNA-precursor to mature 18S rRNA in a late step of the maturation of 40S ribosomal subunits. Also functions as a cell surface receptor for laminin. Plays a role in cell adhesion to the basement membrane and in the consequent activation of signaling transduction pathways. May play a role in cell fate determination and tissue morphogenesis. The polypeptide is Small ribosomal subunit protein uS2 (rpsa) (Danio rerio (Zebrafish)).